The chain runs to 261 residues: Hemin import ATP-binding protein HmuV (261 aa).

In terms of domain architecture, ABC transporter spans 5–241 (LTANAASFAI…DLLARVFDVD (237 aa)). Residue 37–44 (GPNGAGKS) coordinates ATP.

Belongs to the ABC transporter superfamily. Heme (hemin) importer (TC 3.A.1.14.5) family. In terms of assembly, the complex is composed of two ATP-binding proteins (HmuV), two transmembrane proteins (HmuU) and a solute-binding protein (HmuT).

The protein localises to the cell inner membrane. Functionally, part of the ABC transporter complex HmuTUV involved in hemin import. Responsible for energy coupling to the transport system. The sequence is that of Hemin import ATP-binding protein HmuV from Rhodopseudomonas palustris (strain BisB5).